We begin with the raw amino-acid sequence, 154 residues long: Large ribosomal subunit protein uL13 (154 aa).

This sequence belongs to the universal ribosomal protein uL13 family. In terms of assembly, part of the 50S ribosomal subunit.

Its function is as follows. This protein is one of the early assembly proteins of the 50S ribosomal subunit, although it is not seen to bind rRNA by itself. It is important during the early stages of 50S assembly. This Cereibacter sphaeroides (strain ATCC 17025 / ATH 2.4.3) (Rhodobacter sphaeroides) protein is Large ribosomal subunit protein uL13.